Reading from the N-terminus, the 227-residue chain is MEISYHGHSIVKIQTNGKTILIDPFINGNGQTDLKVAEEAPDIILLTHGHNDHVGDTIELAKKKDALVIAPNELANWISWQGVKTHPMHIGGAKEFDFGKVKFTQAFHGSSYVTDTKEIIYMGMPAGILLFVEGLTIYHAGDTALFSDMKLIGERHPIDIAFLPIGDNFTMGPEDAACAVSFLQPKIVVPIHYNTFPPIEQDPQIFADLVQNSEVQILKAGEKVNCF.

This sequence belongs to the UPF0173 family.

The protein is UPF0173 metal-dependent hydrolase Bsph_4138 of Lysinibacillus sphaericus (strain C3-41).